We begin with the raw amino-acid sequence, 168 residues long: NADH-quinone oxidoreductase subunit B (168 aa).

The [4Fe-4S] cluster site is built by C37, C38, C103, and C132.

It belongs to the complex I 20 kDa subunit family. NDH-1 is composed of 14 different subunits. Subunits NuoB, C, D, E, F, and G constitute the peripheral sector of the complex. The cofactor is [4Fe-4S] cluster.

Its subcellular location is the cell inner membrane. It catalyses the reaction a quinone + NADH + 5 H(+)(in) = a quinol + NAD(+) + 4 H(+)(out). Its function is as follows. NDH-1 shuttles electrons from NADH, via FMN and iron-sulfur (Fe-S) centers, to quinones in the respiratory chain. The immediate electron acceptor for the enzyme in this species is believed to be ubiquinone. Couples the redox reaction to proton translocation (for every two electrons transferred, four hydrogen ions are translocated across the cytoplasmic membrane), and thus conserves the redox energy in a proton gradient. This chain is NADH-quinone oxidoreductase subunit B, found in Campylobacter fetus subsp. fetus (strain 82-40).